A 244-amino-acid polypeptide reads, in one-letter code: MPRPSPCADSGGGMMTTLTARPEAITFDPQQTALIVVDMQNAYATPGGYLDLAGFDVSTTRPVIANIQTAVTAARTAGMLIIWFQNGWDEQYVEAGGPGSPNYHKSNALKTMRNQPLLQGKLLAKGSWDYQLVDELVPQPGDIVLPKPRYSGFFNTPLDSILRSRGIRHLVFTGIATNVCVESTLRDGFFLEYFGVVLEDATHQAGPEFAQKAALFNIETFFGWVSDVETFCDALSSTSFARIA.

The Proton acceptor role is filled by Asp-38. Residue Lys-147 is part of the active site. Cys-180 functions as the Nucleophile in the catalytic mechanism.

It belongs to the isochorismatase family. RutB subfamily.

It catalyses the reaction (Z)-3-ureidoacrylate + H2O + H(+) = (Z)-3-aminoacrylate + NH4(+) + CO2. It carries out the reaction (Z)-3-ureidoacrylate + H2O = (Z)-3-aminoacrylate + carbamate + H(+). The enzyme catalyses (Z)-2-methylureidoacrylate + H2O + H(+) = (Z)-2-methylaminoacrylate + NH4(+) + CO2. In terms of biological role, hydrolyzes ureidoacrylate to form aminoacrylate and carbamate. The carbamate hydrolyzes spontaneously, thereby releasing one of the nitrogen atoms of the pyrimidine ring as ammonia and one of its carbon atoms as CO2. This Escherichia coli O1:K1 / APEC protein is Ureidoacrylate amidohydrolase RutB.